Reading from the N-terminus, the 610-residue chain is Ubiquilin-like protein (610 aa).

Positions 31 to 105 (IRVIVKTPGN…IHVVIKSKHG (75 aa)) constitute a Ubiquitin-like domain. Residues 562–607 (QAPEVRFSKEMECLQAMGFVNYNANLQALIATDGDTNAAIYKLKSS) form the UBA domain.

This chain is Ubiquilin-like protein (Ubqlnl), found in Mus musculus (Mouse).